Reading from the N-terminus, the 358-residue chain is 3-isopropylmalate dehydrogenase (358 aa).

NAD(+) is bound at residue 77–90 (GPKWTNLPPDQQPE). Residues R98, R108, R137, and D226 each coordinate substrate. 3 residues coordinate Mg(2+): D226, D250, and D254. 284–296 (GSAPDIAGKGIAN) is an NAD(+) binding site.

This sequence belongs to the isocitrate and isopropylmalate dehydrogenases family. LeuB type 1 subfamily. Homodimer. It depends on Mg(2+) as a cofactor. Mn(2+) is required as a cofactor.

Its subcellular location is the cytoplasm. It carries out the reaction (2R,3S)-3-isopropylmalate + NAD(+) = 4-methyl-2-oxopentanoate + CO2 + NADH. It functions in the pathway amino-acid biosynthesis; L-leucine biosynthesis; L-leucine from 3-methyl-2-oxobutanoate: step 3/4. In terms of biological role, catalyzes the oxidation of 3-carboxy-2-hydroxy-4-methylpentanoate (3-isopropylmalate) to 3-carboxy-4-methyl-2-oxopentanoate. The product decarboxylates to 4-methyl-2 oxopentanoate. The sequence is that of 3-isopropylmalate dehydrogenase from Haemophilus influenzae (strain 86-028NP).